The chain runs to 173 residues: MAIILGIDPGSRITGYGVIRQTGRQLTYLGSGCIRTSVTDLPSRLKLIYAGVSEIITQFQPEYFAIEQVFMAKNADSALKLGQARGAAIVAAVNQDLPVFEYAARQVKQTVVGIGSAEKSQVQHMVRTLLKLPANPQADAADALAIAITHCHLSQNVTRLGEGNLNLARGRLR.

Residues Asp8, Glu67, and Asp139 contribute to the active site. Mg(2+) is bound by residues Asp8, Glu67, and Asp139.

The protein belongs to the RuvC family. As to quaternary structure, homodimer which binds Holliday junction (HJ) DNA. The HJ becomes 2-fold symmetrical on binding to RuvC with unstacked arms; it has a different conformation from HJ DNA in complex with RuvA. In the full resolvosome a probable DNA-RuvA(4)-RuvB(12)-RuvC(2) complex forms which resolves the HJ. The cofactor is Mg(2+).

Its subcellular location is the cytoplasm. It catalyses the reaction Endonucleolytic cleavage at a junction such as a reciprocal single-stranded crossover between two homologous DNA duplexes (Holliday junction).. The RuvA-RuvB-RuvC complex processes Holliday junction (HJ) DNA during genetic recombination and DNA repair. Endonuclease that resolves HJ intermediates. Cleaves cruciform DNA by making single-stranded nicks across the HJ at symmetrical positions within the homologous arms, yielding a 5'-phosphate and a 3'-hydroxyl group; requires a central core of homology in the junction. The consensus cleavage sequence is 5'-(A/T)TT(C/G)-3'. Cleavage occurs on the 3'-side of the TT dinucleotide at the point of strand exchange. HJ branch migration catalyzed by RuvA-RuvB allows RuvC to scan DNA until it finds its consensus sequence, where it cleaves and resolves the cruciform DNA. The chain is Crossover junction endodeoxyribonuclease RuvC from Erwinia tasmaniensis (strain DSM 17950 / CFBP 7177 / CIP 109463 / NCPPB 4357 / Et1/99).